Here is a 315-residue protein sequence, read N- to C-terminus: Protein-L-isoaspartate O-methyltransferase (315 aa).

Disordered regions lie at residues 1–47 (MSGE…KPAA) and 59–89 (RALPGTTAAKPATAPKPNLLKPAMPQPAAPK). Over residues 14–34 (EDLKRAPRKSEVRSGSGERHA) the composition is skewed to basic and acidic residues. 2 stretches are compositionally biased toward low complexity: residues 35–47 (ASAVPKAADKPAA) and 59–81 (RALPGTTAAKPATAPKPNLLKPA). The active site involves S162.

Belongs to the methyltransferase superfamily. L-isoaspartyl/D-aspartyl protein methyltransferase family.

It is found in the cytoplasm. It carries out the reaction [protein]-L-isoaspartate + S-adenosyl-L-methionine = [protein]-L-isoaspartate alpha-methyl ester + S-adenosyl-L-homocysteine. Functionally, catalyzes the methyl esterification of L-isoaspartyl residues in peptides and proteins that result from spontaneous decomposition of normal L-aspartyl and L-asparaginyl residues. It plays a role in the repair and/or degradation of damaged proteins. This chain is Protein-L-isoaspartate O-methyltransferase, found in Burkholderia ambifaria (strain MC40-6).